The chain runs to 920 residues: Vacuolar membrane protease (920 aa).

Residues 1-20 (MASSRAQRFNPIAFTPWPVT) lie on the Cytoplasmic side of the membrane. The chain crosses the membrane as a helical span at residues 21-41 (CITTIVYLALLIPILVINLVV). Residues 42–378 (PSAPETNPKG…AFAVFRLHTL (337 aa)) lie on the Vacuolar side of the membrane. N-linked (GlcNAc...) asparagine glycosylation is found at Asn53, Asn116, and Asn119. 2 residues coordinate Zn(2+): His175 and Asp187. The Proton acceptor role is filled by Glu221. Position 222 (Glu222) interacts with Zn(2+). Asn238 carries N-linked (GlcNAc...) asparagine glycosylation. Zn(2+) contacts are provided by Glu247 and His306. A helical membrane pass occupies residues 379–399 (FAISVALLVIAPLVIFITSVI). Residues 400–433 (LSKTDRMYLFSMSKSLEGTGDQVSLRGLRGFSRT) are Cytoplasmic-facing. A helical transmembrane segment spans residues 434–454 (PIILVIATTIPICLAYLLEKV). The Vacuolar segment spans residues 455–463 (NPYIVHSSQ). Residues 464 to 484 (FSVWSMMFSAWIFLAWFLACA) form a helical membrane-spanning segment. The Cytoplasmic portion of the chain corresponds to 485 to 495 (ADFFRPSALHR). Residues 496-516 (AYSYTWIFVATWIMLVINTVY) traverse the membrane as a helical segment. At 517 to 520 (ANQK) the chain is on the vacuolar side. The chain crosses the membrane as a helical span at residues 521-541 (GIAAGYFLLFYFAGAFLATWI). Residues 542–659 (SYLELFALPR…TLPRWTWVLQ (118 aa)) lie on the Cytoplasmic side of the membrane. The interval 556–605 (ARQTTGRRPSSLSSRLLTSSADELRSNASPSTAEFPGAAGEDTDPTESTS) is disordered. Residues 559–575 (TTGRRPSSLSSRLLTSS) are compositionally biased toward low complexity. The chain crosses the membrane as a helical span at residues 660 to 680 (LLLLAPIVLILVGQLALFLTA). Topologically, residues 681–693 (SMCQVGSDGVSTF) are vacuolar. A helical transmembrane segment spans residues 694–714 (VVYLACAVFTTLLCIPLFPLI). Residues 715–720 (HRFTYH) are Cytoplasmic-facing. The chain crosses the membrane as a helical span at residues 721 to 741 (IPTFLFLVFIGTLIYNLVAFP). Topologically, residues 742 to 920 (FSPANRLKTF…VEASHSFTIQ (179 aa)) are vacuolar. N-linked (GlcNAc...) asparagine glycans are attached at residues Asn760, Asn788, and Asn832.

Belongs to the peptidase M28 family. Requires Zn(2+) as cofactor.

The protein localises to the vacuole membrane. Functionally, may be involved in vacuolar sorting and osmoregulation. This chain is Vacuolar membrane protease, found in Ajellomyces capsulatus (strain H143) (Darling's disease fungus).